The primary structure comprises 975 residues: FHF complex subunit HOOK-interacting protein 1B (975 aa).

The interval 465–496 is disordered; that stretch reads APSPPRPEHASWARGPGSPSVDSSSVVTVPRP. Serine 467 is modified (phosphoserine). Positions 482 to 496 are enriched in low complexity; it reads SPSVDSSSVVTVPRP. Residues serine 510, serine 523, serine 529, and serine 533 each carry the phosphoserine modification. Disordered regions lie at residues 511–548, 573–621, and 690–717; these read LGGSESPGPVPRSPGLTASPTSSPSRRPSPAEEPGELE, SAPY…GLAV, and SNGGAGSEPPLEPPLPPEEEEAYESFTC. The span at 527-538 shows a compositional bias: low complexity; it reads TASPTSSPSRRP. Residues 597 to 608 are compositionally biased toward basic and acidic residues; it reads LLPEEDRDNVRE. A Phosphoserine modification is found at serine 863. Threonine 892 is subject to Phosphothreonine. Phosphoserine is present on serine 900.

The protein belongs to the FHIP family. In terms of assembly, component of the FTS/Hook/FHIP complex (FHF complex), composed of AKTIP/FTS, FHIP1B, and one or more members of the Hook family of proteins HOOK1, HOOK2, and HOOK3. The FHF complex associates with the homotypic vesicular sorting complex (the HOPS complex).

Functionally, component of the FTS/Hook/FHIP complex (FHF complex). The FHF complex may function to promote vesicle trafficking and/or fusion via the homotypic vesicular protein sorting complex (the HOPS complex). FHF complex promotes the distribution of AP-4 complex to the perinuclear area of the cell. This is FHF complex subunit HOOK-interacting protein 1B from Mus musculus (Mouse).